The chain runs to 466 residues: Ribulose bisphosphate carboxylase large chain (466 aa).

K5 carries the N6,N6,N6-trimethyllysine modification. Positions 114 and 164 each coordinate substrate. Catalysis depends on K166, which acts as the Proton acceptor. K168 contributes to the substrate binding site. 3 residues coordinate Mg(2+): K192, D194, and E195. The residue at position 192 (K192) is an N6-carboxylysine. H285 serves as the catalytic Proton acceptor. 3 residues coordinate substrate: R286, H318, and S370.

The protein belongs to the RuBisCO large chain family. Type I subfamily. As to quaternary structure, heterohexadecamer of 8 large chains and 8 small chains; disulfide-linked. The disulfide link is formed within the large subunit homodimers. Mg(2+) is required as a cofactor. The disulfide bond which can form in the large chain dimeric partners within the hexadecamer appears to be associated with oxidative stress and protein turnover.

The protein resides in the plastid. Its subcellular location is the chloroplast. It catalyses the reaction 2 (2R)-3-phosphoglycerate + 2 H(+) = D-ribulose 1,5-bisphosphate + CO2 + H2O. The catalysed reaction is D-ribulose 1,5-bisphosphate + O2 = 2-phosphoglycolate + (2R)-3-phosphoglycerate + 2 H(+). Functionally, ruBisCO catalyzes two reactions: the carboxylation of D-ribulose 1,5-bisphosphate, the primary event in carbon dioxide fixation, as well as the oxidative fragmentation of the pentose substrate in the photorespiration process. Both reactions occur simultaneously and in competition at the same active site. This Aesculus pavia (Red buckeye) protein is Ribulose bisphosphate carboxylase large chain.